A 456-amino-acid polypeptide reads, in one-letter code: Tyrosine phenol-lyase (456 aa).

Position 257 is an N6-(pyridoxal phosphate)lysine (K257).

This sequence belongs to the beta-eliminating lyase family. In terms of assembly, homotetramer. Pyridoxal 5'-phosphate serves as cofactor. In terms of processing, contains L-DOPA (3',4'-dihydroxyphenylalanine).

The protein resides in the cytoplasm. It carries out the reaction L-tyrosine + H2O = phenol + pyruvate + NH4(+). This is Tyrosine phenol-lyase (tpl) from Enterobacter agglomerans (Erwinia herbicola).